Consider the following 345-residue polypeptide: Arginine-hydroxylase NDUFAF5, mitochondrial (345 aa).

A mitochondrion-targeting transit peptide spans 1–36; it reads MLRPAGLWRLCRRPWAARVPAENLGRREVTSGVSPR.

The protein belongs to the methyltransferase superfamily. Interacts with NDUFAF8, leading to stabilize NDUFAF5. Interacts with NDUFS7. Interacts with PYURF (via TRM112 domain); the interaction is direct and stabilizes NDUFAF5 protein.

The protein resides in the mitochondrion inner membrane. Functionally, arginine hydroxylase that mediates hydroxylation of 'Arg-111' of NDUFS7 and is involved in the assembly of mitochondrial NADH:ubiquinone oxidoreductase complex (complex I, MT-ND1) at early stages. May also have methyltransferase activity. The chain is Arginine-hydroxylase NDUFAF5, mitochondrial from Homo sapiens (Human).